The primary structure comprises 434 residues: Angio-associated migratory cell protein (434 aa).

The tract at residues M1 to E63 is disordered. S20 carries the post-translational modification Phosphoserine. Positions D39–E62 are enriched in acidic residues. 8 WD repeats span residues L89–E129, G132–S171, E173–Q212, P214–K254, G258–R299, S315–Q354, Q356–D395, and G398–D433.

The protein resides in the cell membrane. It localises to the cytoplasm. Plays a role in angiogenesis and cell migration. In smooth muscle cell migration, may act through the RhoA pathway. The sequence is that of Angio-associated migratory cell protein (AAMP) from Pongo abelii (Sumatran orangutan).